A 274-amino-acid chain; its full sequence is 2,3,4,5-tetrahydropyridine-2,6-dicarboxylate N-succinyltransferase (274 aa).

The protein belongs to the transferase hexapeptide repeat family.

The protein localises to the cytoplasm. The catalysed reaction is (S)-2,3,4,5-tetrahydrodipicolinate + succinyl-CoA + H2O = (S)-2-succinylamino-6-oxoheptanedioate + CoA. It functions in the pathway amino-acid biosynthesis; L-lysine biosynthesis via DAP pathway; LL-2,6-diaminopimelate from (S)-tetrahydrodipicolinate (succinylase route): step 1/3. This Salmonella heidelberg (strain SL476) protein is 2,3,4,5-tetrahydropyridine-2,6-dicarboxylate N-succinyltransferase.